Reading from the N-terminus, the 85-residue chain is Small ribosomal subunit protein uS17 (85 aa).

Belongs to the universal ribosomal protein uS17 family. In terms of assembly, part of the 30S ribosomal subunit.

One of the primary rRNA binding proteins, it binds specifically to the 5'-end of 16S ribosomal RNA. The sequence is that of Small ribosomal subunit protein uS17 from Acinetobacter baumannii (strain AB307-0294).